The primary structure comprises 955 residues: Isoleucine--tRNA ligase (955 aa).

Residues 60 to 70 (PYANGDLHIGH) carry the 'HIGH' region motif. Glu-563 provides a ligand contact to L-isoleucyl-5'-AMP. The 'KMSKS' region signature appears at 604-608 (KMSKS). Residue Lys-607 participates in ATP binding. Cys-926, Cys-929, Cys-946, and Cys-949 together coordinate Zn(2+).

The protein belongs to the class-I aminoacyl-tRNA synthetase family. IleS type 1 subfamily. As to quaternary structure, monomer. It depends on Zn(2+) as a cofactor.

The protein resides in the cytoplasm. The enzyme catalyses tRNA(Ile) + L-isoleucine + ATP = L-isoleucyl-tRNA(Ile) + AMP + diphosphate. Functionally, catalyzes the attachment of isoleucine to tRNA(Ile). As IleRS can inadvertently accommodate and process structurally similar amino acids such as valine, to avoid such errors it has two additional distinct tRNA(Ile)-dependent editing activities. One activity is designated as 'pretransfer' editing and involves the hydrolysis of activated Val-AMP. The other activity is designated 'posttransfer' editing and involves deacylation of mischarged Val-tRNA(Ile). In Cyanothece sp. (strain PCC 7425 / ATCC 29141), this protein is Isoleucine--tRNA ligase.